A 102-amino-acid chain; its full sequence is uncharacterized protein (102 aa).

The tract at residues 77–102 is disordered; sequence RKDGDEKSKPNSKDYASRPIRDHSKI.

This is an uncharacterized protein from Microplitis demolitor (Parasitoid wasp).